The following is a 147-amino-acid chain: uncharacterized protein (147 aa).

A signal peptide spans 1-21 (MRTIFVGVLLLAIMGEGRLCA).

This is an uncharacterized protein from Treponema pallidum (strain Nichols).